Consider the following 554-residue polypeptide: MGSVAAEEVVVFRSKLPDIEIDNSMTLQEYCFARMAEVGARPCLIDGQTGESYTYAEVESASRRAAAGLRRMGVGKGDVVMSLLRNCPEFAFSFLGAARLGAATTTANPFYTPHEVHRQAEAAGARVIVTEACAVEKVREFAAERGVPVVTVDGAFDGCVEFREVLAAEELDADADVHPDDVVALPYSSGTTGLPKGVMLTHRSLITSVAQQVDGENPNLYFSKDDVILCLLPLFHIYSLNSVLLAGLRAGSTIVIMRKFDLGALVDLVRKHNITIAPFVPPIVVEIAKSPRVTAEDLASIRMVMSGAAPMGKDLQDAFMAKIPNAVLGQGYGMTEAGPVLAMCLAFAKEPFKVKSGSCGTVVRNAELKIVDPDTGTSLGRNQSGEICIRGEQIMKGYLNDPEATKNTIDEDGWLHTGDIGFVDDDDEIFIVDRLKEIIKYKGFQVPPAELEALLITHPEIKDAAVVSMKDDLAGEVPVAFIVRTEGSEITEDEIKKFVAKEVVFYKRINKVFFTDSIPKNPSGKILRKDLRARLAAGIPDAVAAAAADAPKSS.

Ser-188, Ser-189, Gly-190, Thr-191, Thr-192, and Lys-196 together coordinate ATP. The (E)-4-coumaroyl-AMP site is built by Tyr-238 and Ser-242. Position 259 (Lys-259) interacts with CoA. Residues 261 to 330 are SBD1; sequence DLGALVDLVR…AKIPNAVLGQ (70 aa). Ala-308, Gln-330, Gly-331, Thr-335, and Met-343 together coordinate (E)-4-coumaroyl-AMP. Positions 330, 331, and 335 each coordinate ATP. The SBD2 stretch occupies residues 331–398; that stretch reads GYGMTEAGPV…IRGEQIMKGY (68 aa). 2 residues coordinate ATP: Asp-419 and Arg-434. (E)-4-coumaroyl-AMP is bound by residues Lys-436 and Lys-440. Lys-442 and Gly-443 together coordinate CoA. ATP is bound at residue Lys-525.

This sequence belongs to the ATP-dependent AMP-binding enzyme family. Requires Mg(2+) as cofactor. In terms of tissue distribution, expressed in root exodermis and epidermis cells, stem vascular cells, leaf developing vascular bundle cells and parenchyma cells, lemma, palea, stamens and pistil.

The enzyme catalyses (E)-ferulate + ATP + CoA = (E)-feruloyl-CoA + AMP + diphosphate. It carries out the reaction (E)-4-coumarate + ATP + CoA = (E)-4-coumaroyl-CoA + AMP + diphosphate. It catalyses the reaction (E)-caffeate + ATP + CoA = (E)-caffeoyl-CoA + AMP + diphosphate. The catalysed reaction is (E)-cinnamate + ATP + CoA = (E)-cinnamoyl-CoA + AMP + diphosphate. The enzyme catalyses (E)-ferulate + ATP + H(+) = (E)-feruloyl-AMP + diphosphate. It carries out the reaction (E)-feruloyl-AMP + CoA = (E)-feruloyl-CoA + AMP + H(+). It catalyses the reaction (E)-4-coumarate + ATP + H(+) = (E)-4-coumaroyl-AMP + diphosphate. The catalysed reaction is (E)-4-coumaroyl-AMP + CoA = (E)-4-coumaroyl-CoA + AMP + H(+). The enzyme catalyses (E)-caffeate + ATP + H(+) = (E)-caffeoyl-AMP + diphosphate. It carries out the reaction (E)-caffeoyl-AMP + CoA = (E)-caffeoyl-CoA + AMP + H(+). It functions in the pathway phytoalexin biosynthesis; 3,4',5-trihydroxystilbene biosynthesis; 3,4',5-trihydroxystilbene from trans-4-coumarate: step 1/2. In terms of biological role, involved in the phenylpropanoid metabolism by mediating the activation of a number of hydroxycinnamates for the biosynthesis of monolignols and other phenolic secondary metabolites. Catalyzes the formation of CoA esters of cinnamate, 4-coumarate, caffeate and ferulate. Is more efficient with substrates in the following order: ferulate &gt; 4-coumarate &gt; caffeate &gt; cinnamate. Possesses very high activity compared to 4CL1, 4CL2, 4CL4 and 4CL5. Cannot convert sinapate to its corresponding CoA ester. May play a role in the synthesis of lignin as well as other phenolic compounds. Follows a two-step reaction mechanism, wherein the carboxylate substrate first undergoes adenylation by ATP, followed by a thioesterification in the presence of CoA to yield the final CoA thioester. This chain is 4-coumarate--CoA ligase 3, found in Oryza sativa subsp. japonica (Rice).